Consider the following 246-residue polypeptide: Complement C1q tumor necrosis factor-related protein 3 (246 aa).

Residues 1-22 form the signal peptide; it reads MLGRQRIWWHLLPLLFLPFCLC. The region spanning 51-113 is the Collagen-like domain; sequence GYQGPPGPPG…KGEKGYPGVP (63 aa). Positions 53-112 are disordered; that stretch reads QGPPGPPGPPGIPGNHGNNGNNGATGHEGAKGEKGDKGDLGPRGERGQHGPKGEKGYPGV. Positions 55–64 are enriched in pro residues; sequence PPGPPGPPGI. Residues 65-74 are compositionally biased toward low complexity; it reads PGNHGNNGNN. Over residues 80–107 the composition is skewed to basic and acidic residues; that stretch reads EGAKGEKGDKGDLGPRGERGQHGPKGEK. The C1q domain maps to 113-246; it reads PPELQIAFMA…FAGFLLFETK (134 aa).

It is found in the secreted. The polypeptide is Complement C1q tumor necrosis factor-related protein 3 (C1qtnf3) (Mus musculus (Mouse)).